A 309-amino-acid chain; its full sequence is MTARIALASLFVVAAVLAQPWQTTTQRWVLGVSIAAVIVLLAWWKGMFLTTRIGRALAMVRRNRAEDTVETDAHRATVVLRVDPAAPAQLPVVVGYLDRYGITCDKVRITHRDAGGTRRSWISLTVDAVDNLAALQARSARIPLQDTTEVVGRRLADHLREQGWTVTVVEGVDTPLPVSGKETWRGVADDAGVVAAYRVKVDDRLDEVLAEIGHLPAEETWTALEFTGSPAEPLLTVCAAVRTSDRPAAKAPLAGLTPARGRHRPALAALNPLSTERLDGTAVPLPAVVRTSVKGSVEHEAAQEAGHPA.

Helical transmembrane passes span 5–25 and 29–49; these read IALA…QTTT and VLGV…GMFL.

Belongs to the EccE family. Part of the ESX-3 / type VII secretion system (T7SS), which is composed of cytosolic and membrane components. The ESX-3 membrane complex is composed of EccB3, EccC3, EccD3 and EccE3.

It localises to the cell inner membrane. Its function is as follows. Part of the ESX-3 specialized secretion system, which is required for siderophore-mediated iron acquisition and for the secretion of EsxH and EsxG. In Mycolicibacterium smegmatis (strain ATCC 700084 / mc(2)155) (Mycobacterium smegmatis), this protein is ESX-3 secretion system protein EccE3.